Here is a 116-residue protein sequence, read N- to C-terminus: Protein Rev (116 aa).

Serine 5 carries the phosphoserine; by host CK2 modification. Residues 18-26 (IIKILYQSN) are homomultimerization. Residues 26 to 48 (NPYSKPNGSRQARRNRRRRWRAR) form a disordered region. The Nuclear localization signal and RNA-binding (RRE) signature appears at 34–50 (SRQARRNRRRRWRARQN). A compositionally biased stretch (basic residues) spans 36–47 (QARRNRRRRWRA). The short motif at 73 to 84 (LQLPPIERLRLD) is the Nuclear export signal and binding to XPO1 element. Position 92 is a phosphoserine; by host (serine 92).

It belongs to the HIV-1 REV protein family. Homomultimer; when bound to the RRE. Multimeric assembly is essential for activity and may involve XPO1. Binds to human KPNB1, XPO1, TNPO1, RANBP5 and IPO7. Interacts with the viral Integrase. Interacts with human KHDRBS1. Interacts with human NAP1; this interaction decreases Rev multimerization and stimulates its activity. Interacts with human DEAD-box helicases DDX3 and DDX24; these interactions may serve for viral RNA export to the cytoplasm and packaging, respectively. Interacts with human PSIP1; this interaction may inhibit HIV-1 DNA integration by promoting dissociation of the Integrase-LEDGF/p75 complex. In terms of processing, asymmetrically arginine dimethylated at one site by host PRMT6. Methylation impairs the RNA-binding activity and export of viral RNA from the nucleus to the cytoplasm. Post-translationally, phosphorylated by protein kinase CK2. Presence of, and maybe binding to the N-terminus of the regulatory beta subunit of CK2 is necessary for CK2-mediated Rev's phosphorylation.

The protein resides in the host nucleus. It is found in the host nucleolus. The protein localises to the host cytoplasm. Functionally, escorts unspliced or incompletely spliced viral pre-mRNAs (late transcripts) out of the nucleus of infected cells. These pre-mRNAs carry a recognition sequence called Rev responsive element (RRE) located in the env gene, that is not present in fully spliced viral mRNAs (early transcripts). This function is essential since most viral proteins are translated from unspliced or partially spliced pre-mRNAs which cannot exit the nucleus by the pathway used by fully processed cellular mRNAs. Rev itself is translated from a fully spliced mRNA that readily exits the nucleus. Rev's nuclear localization signal (NLS) binds directly to KPNB1/Importin beta-1 without previous binding to KPNA1/Importin alpha-1. KPNB1 binds to the GDP bound form of RAN (Ran-GDP) and targets Rev to the nucleus. In the nucleus, the conversion from Ran-GDP to Ran-GTP dissociates Rev from KPNB1 and allows Rev's binding to the RRE in viral pre-mRNAs. Rev multimerization on the RRE via cooperative assembly exposes its nuclear export signal (NES) to the surface. Rev can then form a complex with XPO1/CRM1 and Ran-GTP, leading to nuclear export of the complex. Conversion from Ran-GTP to Ran-GDP mediates dissociation of the Rev/RRE/XPO1/RAN complex, so that Rev can return to the nucleus for a subsequent round of export. Beside KPNB1, also seems to interact with TNPO1/Transportin-1, RANBP5/IPO5 and IPO7/RANBP7 for nuclear import. The nucleoporin-like HRB/RIP is an essential cofactor that probably indirectly interacts with Rev to release HIV RNAs from the perinuclear region to the cytoplasm. The protein is Protein Rev of Homo sapiens (Human).